A 730-amino-acid polypeptide reads, in one-letter code: Polyribonucleotide nucleotidyltransferase (730 aa).

The Mg(2+) site is built by D489 and D495. Residues 556–615 (PKIDTIKVDVDKIKIVIGKGGETIDKIIEETGVKIDIDEDGNIAIYSSDQEAINRTKEII) form the KH domain. The S1 motif domain maps to 625 to 693 (GEIYEAEVVR…DKGRIDASMK (69 aa)). The disordered stretch occupies residues 691–730 (SMKALLPRPPRSEKSNKEDHQSVRHHGSPKDDKGKEKYDK). A compositionally biased stretch (basic and acidic residues) spans 700–730 (PRSEKSNKEDHQSVRHHGSPKDDKGKEKYDK).

This sequence belongs to the polyribonucleotide nucleotidyltransferase family. The cofactor is Mg(2+).

The protein localises to the cytoplasm. It catalyses the reaction RNA(n+1) + phosphate = RNA(n) + a ribonucleoside 5'-diphosphate. Involved in mRNA degradation. Catalyzes the phosphorolysis of single-stranded polyribonucleotides processively in the 3'- to 5'-direction. In Streptococcus mutans serotype c (strain ATCC 700610 / UA159), this protein is Polyribonucleotide nucleotidyltransferase.